A 56-amino-acid polypeptide reads, in one-letter code: MAVPKKKKSKSKRNQRHAVWKGKAAIAAQKAISLGKSVLTGKAQGFVYPIEEEEEE.

It belongs to the bacterial ribosomal protein bL32 family.

This chain is Large ribosomal subunit protein bL32, found in Prochlorococcus marinus (strain MIT 9301).